The sequence spans 526 residues: Reticulocyte-binding protein homolog 5 (526 aa).

Positions 1–24 (MIRIKKKLILTIIYIHLFILNRLS) are cleaved as a signal peptide. Residues 33 to 51 (KNQENNLTLLPIKSTEEEK) are mediates interaction with human BSG. 2 N-linked (GlcNAc...) asparagine glycosylation sites follow: Asn38 and Asn214. Cystine bridges form between Cys224–Cys317 and Cys345–Cys351. Over residues 259-279 (EIDDKSEETDDETEEVEDSIQ) the composition is skewed to acidic residues. The segment at 259 to 294 (EIDDKSEETDDETEEVEDSIQDTDSNHTPSNKKKND) is disordered. Asn297 carries N-linked (GlcNAc...) asparagine glycosylation.

In terms of assembly, forms a complex composed of RH5, P113 and human BSG/basigin; the complex bridges the merozoite and host erythrocyte membranes. Within the complex, interacts (via C-terminus) with human BSG/basigin isoform 2 (via the extracellular domain); the interaction is independent of BSG glycosylation status. Weakly interacts with P.troglodytes BSG but not with G.gorilla BSG. Also, interacts (via N-terminus) with P113; the interaction tethers RH5 to the merozoite membrane. Component of the PfRH5 adhesion complex composed of 1 copy of CyRPA, RH5 and RIPR; the complex is formed during merozoite invasion of host erythrocytes specifically at the interface between the parasite and host membranes. Within the complex, interacts with CyRPA. CyRPA recruits RIPR to the RH5-P113-BSG complex; the formation of the PfRH5 adhesion complex increases the affinity of RH5 for BSG and probably leads to the release of RH5 from P113 while maintaining the interaction of the PfRH5 adhesion complex with BSG. Post-translationally, cleaved into a 45kDa form during merozoite invasion of host erythrocyte.

The protein resides in the secreted. Its subcellular location is the cytoplasmic vesicle. It localises to the secretory vesicle. The protein localises to the rhoptry lumen. It is found in the host cell membrane. In terms of biological role, essential for the invasion of host erythrocytes by blood stage merozoites. By binding P113 at the surface of the merozoite and human BSG/basigin on the erythrocyte membrane, leads to the establishment of a tight junction between the merozoite and host erythrocyte membranes. In addition, the interaction with BSG results in BSG dimerization which triggers an increase in intracellular Ca(2+) in the erythrocyte. This essential step leads to a rearrangement of the erythrocyte cytoskeleton required for the merozoite invasion. This chain is Reticulocyte-binding protein homolog 5, found in Plasmodium falciparum (isolate 3D7).